The sequence spans 144 residues: 3-hydroxyacyl-[acyl-carrier-protein] dehydratase FabZ (144 aa).

His-51 is an active-site residue.

Belongs to the thioester dehydratase family. FabZ subfamily.

It localises to the cytoplasm. It carries out the reaction a (3R)-hydroxyacyl-[ACP] = a (2E)-enoyl-[ACP] + H2O. Its function is as follows. Involved in unsaturated fatty acids biosynthesis. Catalyzes the dehydration of short chain beta-hydroxyacyl-ACPs and long chain saturated and unsaturated beta-hydroxyacyl-ACPs. The polypeptide is 3-hydroxyacyl-[acyl-carrier-protein] dehydratase FabZ (Clostridium botulinum (strain 657 / Type Ba4)).